The chain runs to 471 residues: UDP-N-acetylmuramate--L-alanine ligase (471 aa).

114 to 120 (GTHGKTT) serves as a coordination point for ATP.

This sequence belongs to the MurCDEF family.

The protein localises to the cytoplasm. The enzyme catalyses UDP-N-acetyl-alpha-D-muramate + L-alanine + ATP = UDP-N-acetyl-alpha-D-muramoyl-L-alanine + ADP + phosphate + H(+). Its pathway is cell wall biogenesis; peptidoglycan biosynthesis. Functionally, cell wall formation. This chain is UDP-N-acetylmuramate--L-alanine ligase, found in Sinorhizobium medicae (strain WSM419) (Ensifer medicae).